Here is an 84-residue protein sequence, read N- to C-terminus: Defensin-like protein 116 (84 aa).

Positions 1 to 24 are cleaved as a signal peptide; it reads MAITKNMLVVLLLTIIFVTSSVHC. Intrachain disulfides connect Cys-40–Cys-80, Cys-46–Cys-71, Cys-55–Cys-78, and Cys-59–Cys-79.

Belongs to the DEFL family.

It is found in the secreted. The chain is Defensin-like protein 116 from Arabidopsis thaliana (Mouse-ear cress).